The following is a 627-amino-acid chain: Protein fem-1 homolog B (627 aa).

ANK repeat units follow at residues 45-74, 87-116, 120-149, 153-182, 186-215, and 218-248; these read QRST…VQTQ, DGAT…NVNH, TNST…NISI, YDNT…DPNA, CGAT…AMMV, and HGMT…NRRS. One copy of the TPR repeat lies at 344–377; sequence SHPIIYRGAVYADNMEFEQCIKLWLHALHLRQKG. ANK repeat units follow at residues 483–527 and 531–568; these read DGST…DVNA and EGNS…HTDM.

The protein belongs to the fem-1 family. Component of a CRL2 E3 ubiquitin-protein ligase complex, also named ECS (Elongin BC-CUL2/5-SOCS-box protein) complex.

It is found in the cytoplasm. The protein localises to the nucleus. The protein operates within protein modification; protein ubiquitination. In terms of biological role, substrate-recognition component of a Cul2-RING (CRL2) E3 ubiquitin-protein ligase complex of the DesCEND (destruction via C-end degrons) pathway, which recognizes a C-degron located at the extreme C terminus of target proteins, leading to their ubiquitination and degradation. The C-degron recognized by the DesCEND pathway is usually a motif of less than ten residues and can be present in full-length proteins, truncated proteins or proteolytically cleaved forms. The CRL2(FEM1B) complex specifically recognizes proteins ending with -Gly-Leu-Asp-Arg, leading to their ubiquitination and degradation. The chain is Protein fem-1 homolog B from Gallus gallus (Chicken).